The chain runs to 463 residues: Siroheme synthase 1 (463 aa).

Residues 1–203 (MDFLPLFCQL…GQQQAAEESV (203 aa)) are precorrin-2 dehydrogenase /sirohydrochlorin ferrochelatase. NAD(+)-binding positions include 22–23 (EV) and 43–44 (PH). Phosphoserine is present on Ser-128. Residues 215 to 463 (GSVTLVGAGP…YGEANTLAGV (249 aa)) form a uroporphyrinogen-III C-methyltransferase region. Pro-224 contributes to the S-adenosyl-L-methionine binding site. Residue Asp-247 is the Proton acceptor of the active site. Lys-269 functions as the Proton donor in the catalytic mechanism. Residues 300-302 (GGD), Ile-305, 330-331 (TA), Met-382, and Gly-411 each bind S-adenosyl-L-methionine.

The protein in the N-terminal section; belongs to the precorrin-2 dehydrogenase / sirohydrochlorin ferrochelatase family. It in the C-terminal section; belongs to the precorrin methyltransferase family.

The catalysed reaction is uroporphyrinogen III + 2 S-adenosyl-L-methionine = precorrin-2 + 2 S-adenosyl-L-homocysteine + H(+). It catalyses the reaction precorrin-2 + NAD(+) = sirohydrochlorin + NADH + 2 H(+). It carries out the reaction siroheme + 2 H(+) = sirohydrochlorin + Fe(2+). It functions in the pathway cofactor biosynthesis; adenosylcobalamin biosynthesis; precorrin-2 from uroporphyrinogen III: step 1/1. It participates in cofactor biosynthesis; adenosylcobalamin biosynthesis; sirohydrochlorin from precorrin-2: step 1/1. Its pathway is porphyrin-containing compound metabolism; siroheme biosynthesis; precorrin-2 from uroporphyrinogen III: step 1/1. The protein operates within porphyrin-containing compound metabolism; siroheme biosynthesis; siroheme from sirohydrochlorin: step 1/1. It functions in the pathway porphyrin-containing compound metabolism; siroheme biosynthesis; sirohydrochlorin from precorrin-2: step 1/1. Functionally, multifunctional enzyme that catalyzes the SAM-dependent methylations of uroporphyrinogen III at position C-2 and C-7 to form precorrin-2 via precorrin-1. Then it catalyzes the NAD-dependent ring dehydrogenation of precorrin-2 to yield sirohydrochlorin. Finally, it catalyzes the ferrochelation of sirohydrochlorin to yield siroheme. This chain is Siroheme synthase 1, found in Aeromonas hydrophila subsp. hydrophila (strain ATCC 7966 / DSM 30187 / BCRC 13018 / CCUG 14551 / JCM 1027 / KCTC 2358 / NCIMB 9240 / NCTC 8049).